The primary structure comprises 195 residues: COMM domain-containing protein 3 (195 aa).

A COMM domain is found at 124-193 (HITDVSWRLE…DASKSLERAT (70 aa)).

It belongs to the COMM domain-containing protein 3 family. As to quaternary structure, component of the commander complex consisting of the CCC subcomplex and the retriever subcomplex. Component of the CCC (COMMD/CCDC22/CCDC93) subcomplex consisting of COMMD1, COMMD2, COMMD3, COMMD4, COMMD5, COMMD6, COMMD7, COMMD8, COMMD9, COMMD10, CCDC22 and CCDC93; within the complex forms a heterodimer with COMMD2. Interacts with NFKB1/p105. Interacts with CCDC22, CCDC93, SCNN1B, CUL3, CUL4A, CUL4B, CUL5. As to expression, widely expressed with highest expression in thymus.

It is found in the cytoplasm. It localises to the nucleus. In terms of biological role, scaffold protein in the commander complex that is essential for endosomal recycling of transmembrane cargos; the commander complex is composed of the CCC subcomplex and the retriever subcomplex. May modulate activity of cullin-RING E3 ubiquitin ligase (CRL) complexes. May down-regulate activation of NF-kappa-B. Modulates Na(+) transport in epithelial cells by regulation of apical cell surface expression of amiloride-sensitive sodium channel (ENaC) subunits. This chain is COMM domain-containing protein 3 (COMMD3), found in Homo sapiens (Human).